Here is an 81-residue protein sequence, read N- to C-terminus: Photosystem I iron-sulfur center (81 aa).

4Fe-4S ferredoxin-type domains lie at 2 to 31 (AHSV…MIPW) and 39 to 68 (IASA…VRVY). Cys-11, Cys-14, Cys-17, Cys-21, Cys-48, Cys-51, Cys-54, and Cys-58 together coordinate [4Fe-4S] cluster.

In terms of assembly, the eukaryotic PSI reaction center is composed of at least 11 subunits. Requires [4Fe-4S] cluster as cofactor.

Its subcellular location is the plastid. The protein resides in the chloroplast thylakoid membrane. It catalyses the reaction reduced [plastocyanin] + hnu + oxidized [2Fe-2S]-[ferredoxin] = oxidized [plastocyanin] + reduced [2Fe-2S]-[ferredoxin]. Functionally, apoprotein for the two 4Fe-4S centers FA and FB of photosystem I (PSI); essential for photochemical activity. FB is the terminal electron acceptor of PSI, donating electrons to ferredoxin. The C-terminus interacts with PsaA/B/D and helps assemble the protein into the PSI complex. Required for binding of PsaD and PsaE to PSI. PSI is a plastocyanin-ferredoxin oxidoreductase, converting photonic excitation into a charge separation, which transfers an electron from the donor P700 chlorophyll pair to the spectroscopically characterized acceptors A0, A1, FX, FA and FB in turn. This chain is Photosystem I iron-sulfur center, found in Adiantum capillus-veneris (Maidenhair fern).